The sequence spans 484 residues: Suppressor of fused homolog (484 aa).

The disordered stretch occupies residues 1–24 (MAELRPSGAPGPTAPPAPGPTAPP). Residues 12–23 (PTAPPAPGPTAP) are compositionally biased toward pro residues. A Glycyl lysine isopeptide (Lys-Gly) (interchain with G-Cter in ubiquitin) cross-link involves residue lysine 257. The segment at 279–360 (SRPPEDDEDS…SSTAIIPHEL (82 aa)) is disordered. Serine 301 is subject to Phosphoserine. Lysine 303 is subject to N6-acetyllysine. Lysine 321 participates in a covalent cross-link: Glycyl lysine isopeptide (Lys-Gly) (interchain with G-Cter in SUMO2). The segment covering 336–347 (AHDRAPSRKDSL) has biased composition (basic and acidic residues). Residues serine 342, serine 346, and serine 352 each carry the phosphoserine modification. Position 353 is a phosphothreonine (threonine 353). Position 481 is a phosphoserine (serine 481).

This sequence belongs to the SUFU family. As to quaternary structure, may form homodimers. Part of a DNA-bound corepressor complex containing SAP18, GLI1 and SIN3. Part of a complex containing CTNNB1. Binds BTRC, GLI2, GLI3, SAP18 and STK36. Binds both free and DNA-bound GLI1. Interacts with KIF7. Interacts with GLI3FL and this interaction regulates the formation of either repressor or activator forms of GLI3. Its association with GLI3FL is regulated by Hh signaling and dissociation of the SUFU-GLI3 interaction requires the presence of the ciliary motor KIF3A. Interacts with ULK3; inactivating the protein kinase activity of ULK3. Interacts with RAB23. In terms of processing, polyubiquitinated at Lys-257 by the SCF(FBXL17) complex, leading to its subsequent degradation and allowing the release of GLI1 for proper hedgehog/smoothened signal transduction. Ubiquitination is impaired by phosphorylation at Ser-342, Ser-346, Ser-352 and Thr-353. Phosphorylation at Ser-342, Ser-346, Ser-352 and Thr-353 prevents ubiquitination by the SCF(FBXL17) complex. Ubiquitous in adult tissues. Detected in osteoblasts of the perichondrium in the developing limb of 12-week old embryos. Isoform 1 is detected in fetal brain, lung, kidney and testis. Isoform 2 is detected in fetal testis, and at much lower levels in fetal brain, lung and kidney.

It localises to the cytoplasm. The protein localises to the nucleus. Functionally, negative regulator in the hedgehog/smoothened signaling pathway. Down-regulates GLI1-mediated transactivation of target genes. Down-regulates GLI2-mediated transactivation of target genes. Part of a corepressor complex that acts on DNA-bound GLI1. May also act by linking GLI1 to BTRC and thereby targeting GLI1 to degradation by the proteasome. Sequesters GLI1, GLI2 and GLI3 in the cytoplasm, this effect is overcome by binding of STK36 to both SUFU and a GLI protein. Negative regulator of beta-catenin signaling. Regulates the formation of either the repressor form (GLI3R) or the activator form (GLI3A) of the full-length form of GLI3 (GLI3FL). GLI3FL is complexed with SUFU in the cytoplasm and is maintained in a neutral state. Without the Hh signal, the SUFU-GLI3 complex is recruited to cilia, leading to the efficient processing of GLI3FL into GLI3R. When Hh signaling is initiated, SUFU dissociates from GLI3FL and the latter translocates to the nucleus, where it is phosphorylated, destabilized, and converted to a transcriptional activator (GLI3A). Required for normal embryonic development. Required for the proper formation of hair follicles and the control of epidermal differentiation. In Homo sapiens (Human), this protein is Suppressor of fused homolog.